The chain runs to 194 residues: MYLAQIKAELQEAADVLDKFMSDEKNIQLIQDAALLISNSFKQGGKVLSCGNGGSHCDAMHFAEELTGRYRENRPGYPAIAISDVSHLSCVSNDFGYEYVFSRYLEAVGQKGDVLFGLSTSGNSKNVLNAIKVAKEKGMKVIAMTGKDGGQMAGLADVEIRVPHFRYADRTQEIHIKVIHILMMLIEFEMAKQA.

Residues 37-194 (ISNSFKQGGK…LIEFEMAKQA (158 aa)) form the SIS domain. Residue 52-54 (NGG) coordinates substrate. H61 and E65 together coordinate Zn(2+). Residues E65, 93–94 (ND), 119–121 (STS), S124, and Q172 contribute to the substrate site. Positions 172 and 180 each coordinate Zn(2+).

The protein belongs to the SIS family. GmhA subfamily. As to quaternary structure, homotetramer. Requires Zn(2+) as cofactor.

The protein localises to the cytoplasm. The enzyme catalyses 2 D-sedoheptulose 7-phosphate = D-glycero-alpha-D-manno-heptose 7-phosphate + D-glycero-beta-D-manno-heptose 7-phosphate. Its pathway is carbohydrate biosynthesis; D-glycero-D-manno-heptose 7-phosphate biosynthesis; D-glycero-alpha-D-manno-heptose 7-phosphate and D-glycero-beta-D-manno-heptose 7-phosphate from sedoheptulose 7-phosphate: step 1/1. Catalyzes the isomerization of sedoheptulose 7-phosphate in D-glycero-D-manno-heptose 7-phosphate. The polypeptide is Phosphoheptose isomerase (Actinobacillus pleuropneumoniae serotype 5b (strain L20)).